The chain runs to 176 residues: N-alpha-acetyltransferase 30 (176 aa).

The region spanning 3–159 (IVYKPLDIRN…DAFKLILPLT (157 aa)) is the N-acetyltransferase domain.

The protein belongs to the acetyltransferase family. MAK3 subfamily. Component of the N-terminal acetyltransferase C (NatC) complex, which is composed of MAK3, MAK10 and MAK31.

Its subcellular location is the cytoplasm. It is found in the nucleus. The catalysed reaction is N-terminal L-methionyl-L-leucyl-[protein] + acetyl-CoA = N-terminal N(alpha)-acetyl-L-methionyl-L-leucyl-[protein] + CoA + H(+). It catalyses the reaction N-terminal L-methionyl-L-isoleucyl-[protein] + acetyl-CoA = N-terminal N(alpha)-acetyl-L-methionyl-L-isoleucyl-[protein] + CoA + H(+). It carries out the reaction N-terminal L-methionyl-L-phenylalanyl-[protein] + acetyl-CoA = N-terminal N(alpha)-acetyl-L-methionyl-L-phenylalanyl-[protein] + CoA + H(+). The enzyme catalyses N-terminal L-methionyl-L-tryptophyl-[protein] + acetyl-CoA = N-terminal N(alpha)-acetyl-L-methionyl-L-tryptophyl-[protein] + CoA + H(+). The catalysed reaction is N-terminal L-methionyl-L-tyrosyl-[protein] + acetyl-CoA = N-terminal N(alpha)-acetyl-L-methionyl-L-tyrosyl-[protein] + CoA + H(+). In terms of biological role, catalytic component of the NatC N-terminal acetyltransferase, which catalyzes acetylation of the N-terminus Met of L-A virus GAG protein and possibly GRH1. In Saccharomyces cerevisiae (strain ATCC 204508 / S288c) (Baker's yeast), this protein is N-alpha-acetyltransferase 30 (MAK3).